The chain runs to 106 residues: uncharacterized protein (106 aa).

The span at 24–35 (ANSISSTSFYHK) shows a compositional bias: polar residues. 2 disordered regions span residues 24-49 (ANSI…SCEE) and 65-87 (LTAE…SSDE). Composition is skewed to low complexity over residues 36–46 (SSNNNSHANAS) and 74–85 (SLSASNQPASSS).

This is an uncharacterized protein from Arabidopsis thaliana (Mouse-ear cress).